The chain runs to 278 residues: Ribonuclease HII (278 aa).

One can recognise an RNase H type-2 domain in the interval 71–259 (WPVAGCDEAG…VAAAWDKHAP (189 aa)). A divalent metal cation is bound by residues Asp77, Glu78, and Asp168.

Belongs to the RNase HII family. The cofactor is Mn(2+). It depends on Mg(2+) as a cofactor.

It is found in the cytoplasm. The enzyme catalyses Endonucleolytic cleavage to 5'-phosphomonoester.. In terms of biological role, endonuclease that specifically degrades the RNA of RNA-DNA hybrids. This is Ribonuclease HII from Rhodopseudomonas palustris (strain BisA53).